Reading from the N-terminus, the 314-residue chain is tRNA dimethylallyltransferase (314 aa).

ATP is bound at residue 12-19; the sequence is GPTASGKT. Position 14–19 (14–19) interacts with substrate; sequence TASGKT. 4 interaction with substrate tRNA regions span residues 37 to 40, 161 to 165, 242 to 247, and 275 to 282; these read DSAL, QRINR, RCVGYR, and KRQITWLR.

This sequence belongs to the IPP transferase family. Monomer. Mg(2+) is required as a cofactor.

The catalysed reaction is adenosine(37) in tRNA + dimethylallyl diphosphate = N(6)-dimethylallyladenosine(37) in tRNA + diphosphate. Functionally, catalyzes the transfer of a dimethylallyl group onto the adenine at position 37 in tRNAs that read codons beginning with uridine, leading to the formation of N6-(dimethylallyl)adenosine (i(6)A). This is tRNA dimethylallyltransferase from Mannheimia succiniciproducens (strain KCTC 0769BP / MBEL55E).